Reading from the N-terminus, the 285-residue chain is Probable endonuclease 4 (285 aa).

Zn(2+)-binding residues include histidine 69, histidine 109, glutamate 145, aspartate 179, histidine 182, histidine 216, aspartate 229, histidine 231, and glutamate 261.

This sequence belongs to the AP endonuclease 2 family. Zn(2+) is required as a cofactor.

It carries out the reaction Endonucleolytic cleavage to 5'-phosphooligonucleotide end-products.. In terms of biological role, endonuclease IV plays a role in DNA repair. It cleaves phosphodiester bonds at apurinic or apyrimidinic (AP) sites, generating a 3'-hydroxyl group and a 5'-terminal sugar phosphate. The sequence is that of Probable endonuclease 4 from Salmonella dublin (strain CT_02021853).